Reading from the N-terminus, the 308-residue chain is Ornithine carbamoyltransferase (308 aa).

Residues 56-59 (STRT), Q83, R107, and 134-137 (HPCQ) each bind carbamoyl phosphate. L-ornithine-binding positions include N165, D225, and 229-230 (SM). Residues 266–267 (CL) and R294 each bind carbamoyl phosphate.

The protein belongs to the aspartate/ornithine carbamoyltransferase superfamily. OTCase family.

The protein resides in the cytoplasm. The enzyme catalyses carbamoyl phosphate + L-ornithine = L-citrulline + phosphate + H(+). It functions in the pathway amino-acid biosynthesis; L-arginine biosynthesis; L-arginine from L-ornithine and carbamoyl phosphate: step 1/3. Functionally, reversibly catalyzes the transfer of the carbamoyl group from carbamoyl phosphate (CP) to the N(epsilon) atom of ornithine (ORN) to produce L-citrulline. This is Ornithine carbamoyltransferase from Ruegeria pomeroyi (strain ATCC 700808 / DSM 15171 / DSS-3) (Silicibacter pomeroyi).